A 373-amino-acid chain; its full sequence is ORC1-type DNA replication protein 2 (373 aa).

ATP is bound by residues 63–67, Tyr-205, and Arg-217; that span reads TGKTS.

Belongs to the CDC6/cdc18 family.

Functionally, involved in regulation of DNA replication. This Methanosarcina acetivorans (strain ATCC 35395 / DSM 2834 / JCM 12185 / C2A) protein is ORC1-type DNA replication protein 2 (cdc6-2).